A 122-amino-acid chain; its full sequence is S-adenosylmethionine decarboxylase proenzyme (122 aa).

Serine 63 acts as the Schiff-base intermediate with substrate; via pyruvic acid in catalysis. Serine 63 is subject to Pyruvic acid (Ser); by autocatalysis. Residue histidine 68 is the Proton acceptor; for processing activity of the active site. The active-site Proton donor; for catalytic activity is cysteine 83.

The protein belongs to the prokaryotic AdoMetDC family. Type 1 subfamily. Heterotetramer of two alpha and two beta chains arranged as a dimer of alpha/beta heterodimers. Pyruvate serves as cofactor. In terms of processing, is synthesized initially as an inactive proenzyme. Formation of the active enzyme involves a self-maturation process in which the active site pyruvoyl group is generated from an internal serine residue via an autocatalytic post-translational modification. Two non-identical subunits are generated from the proenzyme in this reaction, and the pyruvate is formed at the N-terminus of the alpha chain, which is derived from the carboxyl end of the proenzyme. The post-translation cleavage follows an unusual pathway, termed non-hydrolytic serinolysis, in which the side chain hydroxyl group of the serine supplies its oxygen atom to form the C-terminus of the beta chain, while the remainder of the serine residue undergoes an oxidative deamination to produce ammonia and the pyruvoyl group blocking the N-terminus of the alpha chain.

It catalyses the reaction S-adenosyl-L-methionine + H(+) = S-adenosyl 3-(methylsulfanyl)propylamine + CO2. The protein operates within amine and polyamine biosynthesis; S-adenosylmethioninamine biosynthesis; S-adenosylmethioninamine from S-adenosyl-L-methionine: step 1/1. In terms of biological role, catalyzes the decarboxylation of S-adenosylmethionine to S-adenosylmethioninamine (dcAdoMet), the propylamine donor required for the synthesis of the polyamines spermine and spermidine from the diamine putrescine. The protein is S-adenosylmethionine decarboxylase proenzyme of Methanococcus maripaludis (strain C5 / ATCC BAA-1333).